The primary structure comprises 739 residues: Nucleoprotein (739 aa).

The segment at 1 to 25 is oligomerization, N-terminal arm; that stretch reads MDSRPQKIWMAPSLTESDMDYHKIL. An NP core region spans residues 26–405; that stretch reads TAGLSVQQGI…TLRKERLAKL (380 aa). Residues 415–647 form a disordered region; it reads PKTSGHYDDD…DSDNTQSEHS (233 aa). Composition is skewed to low complexity over residues 449-458 and 504-514; these read SQDTTIPDVV and KGGQQKNSQKG. Positions 562 to 567 match the Host PPP2R5C-binding motif motif; that stretch reads LTPINE. Acidic residues predominate over residues 567–579; that stretch reads EEADPLDDADDET. The short motif at 606-611 is the VP30-binding motif element; sequence PPAPVY. The segment covering 611–638 has biased composition (basic and acidic residues); that stretch reads YRDHSEKKELPQDEQQDQDHTQEARNQD.

Belongs to the filoviruses nucleoprotein family. As to quaternary structure, homooligomer. Homomultimerizes to form the nucleocapsid. Binds to viral genomic RNA. Interacts with VP35 and VP30 to form the nucleocapsid. Interacts with host PPP2R5C; this interaction leads to VP30 dephosphorylation and viral transcription. Interacts with VP24; this interaction facilitates nucleocapsid assembly and genome packaging. Interacts with matrix protein VP40; this interaction allows recruitment of the nucleocapsid into progeny virions. Interacts with host STAU1. Interacts with host NXF1 (via RNA-binding domain); this interaction recruits NXF1 to the inclusion bodies were viral replication takes place, probably to export viral mRNA-NXF1 complexes from these sites. Interacts with host CCDC92; this interaction sequesters NP in the host cytoplasm. Interacts with host TRIM14. Post-translationally, phosphorylated by host. O-glycosylated by host. In terms of processing, acetylated by host EP300 in vitro.

The protein localises to the virion. The protein resides in the host cytoplasm. Functionally, oligomerizes into helical capsid to encapsidate the viral genome, protecting it from nucleases and the cellular innate immune response. VP35 binds to and stabilizes monomeric NP, keeping it soluble. Upon virus replication, NP is recruited to bind cooperatively viral genomic RNA and VP35 is released. The encapsidated genomic RNA is termed the nucleocapsid and serves as template for transcription and replication. The nucleocapsid is helical with a pitch of 10.81 NP per turn and a diameter of about 22nm. Each NP binds to six nucleotides of viral genomic RNA, three being exposed to the solvant and three hidden into the nucleocapsid. Also recruits host PPP2R5C phosphatase to dephosphorylate VP30 and thereby promote viral transcription. Upon virion assembly and budding, NP binds to VP24 and possibly host STAU1. This is Nucleoprotein (NP) from Epomops franqueti (Franquet's epauletted fruit bat).